A 547-amino-acid polypeptide reads, in one-letter code: MPAKEIAFHQGAREAILRGVQTLAEAVAVTLGPKGRNVVIEKSFGSPTITKDGVTVAKEIEVENKFENMGAQMVREVASQTSDKAGDGTTTATVLARALFEEGLKLVAAGHNPMDLKRGIDRAVEVIVAELKKLSKPTQGKKDIAQVGTISANGDETIGNIIAEAMEKVGKEGVITVEEAKGLETTLDVVEGMQFDRGYSSPYFVTNPDRMEAVLEDPFILITEKKISAMADLIPVLEQVARSGKPLLIVAEDVEGEALATLVVNKLRGTLHVCAVKAPGFGDRRKEMLKDIATLTGGNVVAEELGIKLEQLTVKDLGRAKRITIDKENTTIVDGEGKREDIEARIKQIRAQIEETTSDYDREKLQERLAKLVGGVAVINVGAATETEMKEKKARVEDALHATRAAVEEGIVPGGGVAYLRALQALKKLEVPEGDQRFGVAIVQKALEYPARRIAENAGWDGAVVVSRINDGKAAHGFNAASEVFEDLEKAGVIDPTKVSRTALQNAASVASLLLTTEAMVAEKPKKKGAPAGGGMGGMGGMDEMDY.

ATP-binding positions include 30–33 (TLGP), lysine 51, 87–91 (DGTTT), glycine 415, 479–481 (NAA), and aspartate 495. The disordered stretch occupies residues 525–547 (PKKKGAPAGGGMGGMGGMDEMDY). Residues 531-541 (PAGGGMGGMGG) show a composition bias toward gly residues.

The protein belongs to the chaperonin (HSP60) family. In terms of assembly, forms a cylinder of 14 subunits composed of two heptameric rings stacked back-to-back. Interacts with the co-chaperonin GroES.

The protein localises to the cytoplasm. The catalysed reaction is ATP + H2O + a folded polypeptide = ADP + phosphate + an unfolded polypeptide.. Functionally, together with its co-chaperonin GroES, plays an essential role in assisting protein folding. The GroEL-GroES system forms a nano-cage that allows encapsulation of the non-native substrate proteins and provides a physical environment optimized to promote and accelerate protein folding. In Anaeromyxobacter sp. (strain Fw109-5), this protein is Chaperonin GroEL 1.